Here is a 555-residue protein sequence, read N- to C-terminus: Potassium-transporting ATPase potassium-binding subunit (555 aa).

A run of 10 helical transmembrane segments spans residues 2-22 (IWVAVIITMLLFILVAKPTGV), 60-80 (QYALSLVLLNGFMIVVVYFIF), 130-150 (IGITFLMFAAPATTLALVMAF), 173-193 (VFLPIAFIAALVFVALGVPQT), 246-266 (MSNILQMMLMMLLPTALPFTY), 278-298 (ILFVSLFMVFLLGFITITTSE), 374-394 (AGFVNIIMYAIIAVFISGLMV), 412-432 (LIAVTILFHPLLILGFSALAL), 483-503 (LVMFLGRYFSLITMLAVAASL), and 525-545 (GIFIGTIVIVGALTFFPMLVL).

This sequence belongs to the KdpA family. In terms of assembly, the system is composed of three essential subunits: KdpA, KdpB and KdpC.

Its subcellular location is the cell membrane. In terms of biological role, part of the high-affinity ATP-driven potassium transport (or Kdp) system, which catalyzes the hydrolysis of ATP coupled with the electrogenic transport of potassium into the cytoplasm. This subunit binds the extracellular potassium ions and delivers the ions to the membrane domain of KdpB through an intramembrane tunnel. The sequence is that of Potassium-transporting ATPase potassium-binding subunit from Bacillus cereus (strain B4264).